Reading from the N-terminus, the 159-residue chain is Eukaryotic translation initiation factor 5A-1 (159 aa).

Residues 1–12 show a composition bias toward basic and acidic residues; it reads MSDEEHHFESKA. The segment at 1 to 23 is disordered; it reads MSDEEHHFESKADAGASKTYPQQ. Hypusine is present on Lys-52.

Belongs to the eIF-5A family. Lys-52 undergoes hypusination, a unique post-translational modification that consists in the addition of a butylamino group from spermidine to lysine side chain, leading to the formation of the unusual amino acid hypusine. eIF-5As are the only known proteins to undergo this modification, which is essential for their function.

Translation factor that promotes translation elongation and termination, particularly upon ribosome stalling at specific amino acid sequence contexts. Binds between the exit (E) and peptidyl (P) site of the ribosome and promotes rescue of stalled ribosome: specifically required for efficient translation of polyproline-containing peptides as well as other motifs that stall the ribosome. Acts as a ribosome quality control (RQC) cofactor by joining the RQC complex to facilitate peptidyl transfer during CAT tailing step. This chain is Eukaryotic translation initiation factor 5A-1, found in Solanum lycopersicum (Tomato).